A 124-amino-acid polypeptide reads, in one-letter code: Small ribosomal subunit protein uS12cz/uS12cy (124 aa).

Belongs to the universal ribosomal protein uS12 family. Part of the 30S ribosomal subunit.

It is found in the plastid. Its function is as follows. With S4 and S5 plays an important role in translational accuracy. Located at the interface of the 30S and 50S subunits. This Epifagus virginiana (Beechdrops) protein is Small ribosomal subunit protein uS12cz/uS12cy (rps12-A).